Consider the following 1896-residue polypeptide: Obscurin-like protein 1 (1896 aa).

Phosphoserine is present on S10. The Ig-like 1 domain maps to 12 to 100 (PCFLRFPRPV…GEAYAAAAVT (89 aa)). The interval 17–19 (FPR) is interaction with TTN. C33 and C84 are disulfide-bonded. The segment at 85–94 (RARNAAGEAY) is interaction with TTN. Positions 106–127 (ASDPELQPAERPLPSPGSGEGA) are disordered. Ig-like domains are found at residues 128-225 (PVFL…ALLQ), 243-330 (PVVE…QTLS), and 339-425 (PRLR…ANVT). 3 disulfides stabilise this stretch: C149–C209, C267–C319, and C362–C412. The Fibronectin type-III domain maps to 517–615 (PPGPPILAEM…FHGSAHLVPT (99 aa)). Ig-like domains lie at 714 to 800 (PVHI…FGVT), 804 to 893 (PPVH…VTIT), 902 to 982 (PSGK…FTVT), 986 to 1075 (PPVR…VTVT), 1078 to 1172 (PERI…PPVQ), 1174 to 1261 (LALE…FTVQ), 1265 to 1357 (PPVR…VEEP), 1357 to 1534 (PLLV…ARLS), 1628 to 1720 (PVTI…RTVA), and 1794 to 1896 (PAQS…VEGN). 6 disulfide bridges follow: C738/C788, C829/C879, C920/C970, C1011/C1061, C1103/C1153, and C1195/C1245. 2 cysteine pairs are disulfide-bonded: C1381/C1522 and C1650/C1700.

As to quaternary structure, component of the 3M complex, composed of core components CUL7, CCDC8 and OBSL1. Interacts with CCDC8. Interacts with CUL7; the interaction is direct. Interacts with FBXW8. Interacts (via N-terminal Ig-like domain) with TTN/titin (via C-terminal Ig-like domain); the interaction is direct. Widely expressed, with predominant levels found in the heart.

It is found in the cytoplasm. The protein localises to the cytoskeleton. The protein resides in the microtubule organizing center. Its subcellular location is the centrosome. It localises to the perinuclear region. It is found in the golgi apparatus. Functionally, core component of the 3M complex, a complex required to regulate microtubule dynamics and genome integrity. It is unclear how the 3M complex regulates microtubules, it could act by controlling the level of a microtubule stabilizer. Acts as a regulator of the Cul7-RING(FBXW8) ubiquitin-protein ligase, playing a critical role in the ubiquitin ligase pathway that regulates Golgi morphogenesis and dendrite patterning in brain. Required to localize CUL7 to the Golgi apparatus in neurons. In Homo sapiens (Human), this protein is Obscurin-like protein 1.